The chain runs to 66 residues: uncharacterized protein (66 aa).

Residues 1–21 (MPGGDRTGPWGQGPRTGRRAG) are disordered.

This is an uncharacterized protein from Archaeoglobus fulgidus (strain ATCC 49558 / DSM 4304 / JCM 9628 / NBRC 100126 / VC-16).